Consider the following 145-residue polypeptide: Peptide methionine sulfoxide reductase MsrB (145 aa).

The 124-residue stretch at 4 to 127 folds into the MsrB domain; that stretch reads SEELKQRIGD…NSAALKFIPY (124 aa). The Nucleophile role is filled by cysteine 116.

It belongs to the MsrB Met sulfoxide reductase family.

The catalysed reaction is L-methionyl-[protein] + [thioredoxin]-disulfide + H2O = L-methionyl-(R)-S-oxide-[protein] + [thioredoxin]-dithiol. The polypeptide is Peptide methionine sulfoxide reductase MsrB (Streptococcus pyogenes serotype M6 (strain ATCC BAA-946 / MGAS10394)).